The sequence spans 551 residues: L-lactate permease (551 aa).

13 consecutive transmembrane segments (helical) span residues 13-33, 37-57, 69-89, 131-151, 159-179, 194-214, 220-240, 244-264, 366-386, 405-425, 438-458, 494-514, and 530-550; these read NIWL…FALI, LKGY…ALLF, VVYG…AAVF, GAAG…GLGF, LCLI…PILV, MVGR…MAIM, IKET…AQYL, FIGP…CLTL, FDWF…SIVW, LALP…SNYS, TGHA…FLTG, VTGK…VGLV, and IFTC…TWMI.

This sequence belongs to the lactate permease family.

It is found in the cell inner membrane. The catalysed reaction is (S)-lactate(in) + H(+)(in) = (S)-lactate(out) + H(+)(out). It carries out the reaction (R)-lactate(in) + H(+)(in) = (R)-lactate(out) + H(+)(out). The enzyme catalyses glycolate(in) + H(+)(in) = glycolate(out) + H(+)(out). Inhibited by the proton ionophore carbonyl cyanide m-chlorophenylhydrazone (CCCP). In terms of biological role, uptake of L-lactate across the membrane. Can also transport D-lactate and glycolate. Seems to be driven by a proton motive force. This chain is L-lactate permease, found in Escherichia coli (strain K12).